We begin with the raw amino-acid sequence, 143 residues long: uncharacterized protein (143 aa).

The transit peptide at 1-38 directs the protein to the mitochondrion; sequence MKYWKYLSQLTIRRPLTYNNALLYRNRFPSILTWKRSA.

It localises to the mitochondrion. This is an uncharacterized protein from Schizosaccharomyces pombe (strain 972 / ATCC 24843) (Fission yeast).